Reading from the N-terminus, the 64-residue chain is Large ribosomal subunit protein bL35 (64 aa).

The segment at 19–44 is disordered; it reads TGKLKASRPGRRHKLTGKTPKRKRQL. Basic residues predominate over residues 23–44; it reads KASRPGRRHKLTGKTPKRKRQL.

This sequence belongs to the bacterial ribosomal protein bL35 family.

This is Large ribosomal subunit protein bL35 from Protochlamydia amoebophila (strain UWE25).